We begin with the raw amino-acid sequence, 464 residues long: Hydrogen cyanide synthase subunit HcnB (464 aa).

As to quaternary structure, heterotrimer of HcnA, HcnB and HcnC.

The protein localises to the cell membrane. It carries out the reaction glycine + 2 A = hydrogen cyanide + 2 AH2 + CO2. Its activity is regulated as follows. Oxygen is necessary for cyanogenesis. Activated by succinate, glycine methyl ester, glucose and D,L-methionine in addition to glycine. Phenazine methosulfate, methylene blue, 2,6-dichlorophenolindophenol (DCIP) and ferricyanide can replace oxygen for the reaction. Inhibited by pyrrolnitrin and acriflavine at 1 mM concentration. A three-component membrane-bound flavoenzyme that catalyzes the formation of hydrogen cyanide, a secondary metabolite, by transfer of electrons to a cyanide-resistant branch of the aerobic respiratory chain. This chain is Hydrogen cyanide synthase subunit HcnB, found in Pseudomonas aeruginosa (strain ATCC 15692 / DSM 22644 / CIP 104116 / JCM 14847 / LMG 12228 / 1C / PRS 101 / PAO1).